The sequence spans 96 residues: Co-chaperonin GroES (96 aa).

Belongs to the GroES chaperonin family. Heptamer of 7 subunits arranged in a ring. Interacts with the chaperonin GroEL.

The protein localises to the cytoplasm. Its function is as follows. Together with the chaperonin GroEL, plays an essential role in assisting protein folding. The GroEL-GroES system forms a nano-cage that allows encapsulation of the non-native substrate proteins and provides a physical environment optimized to promote and accelerate protein folding. GroES binds to the apical surface of the GroEL ring, thereby capping the opening of the GroEL channel. This Polaromonas sp. (strain JS666 / ATCC BAA-500) protein is Co-chaperonin GroES.